A 505-amino-acid polypeptide reads, in one-letter code: MSEQQQQGAEQALDLNNEMQARREKLAALRKEGIAFPNDFRRDTTSDKLHSLYDGKSKEELEALNVEVSVAGRMMTRRIMGKASFVTLQDMGGRIQLYVARDDLKDDVYSEQFKKWDLGDIIGARGTLFRTQTGELSIHCHSIHLLTKALRPLPDKFHGLSDQETRYRQRYLDLIANESSRETFRTRSKILAAIRNFMVNKGFMEVETPMMQVIPGGASARPFITHHNALDIDMYLRIAPELYLKRLVVGGFERVFEINRNFRNEGVSPRHNPEFTMMELYMAYADYKDLIVLTEELFRTISQDVLGSSVVQYGDQTFDFGKPFIKMSMKEAICHYRPDIASADLDDMDKACKIAESLGIKIEKSWGLGRVQCEIFDETAESQLIQPTFITEYPAEVSPLARRNDDNPFITDRFEFFIGGREIGNGFSELNDAEDQAERFQDQVKAKDAGDDEAMFYDEDYVTALEHGLPPTAGLGVGIDRMMMLFTNSHTIRDVILFPAMRPQK.

Mg(2+) contacts are provided by Glu415 and Glu422.

This sequence belongs to the class-II aminoacyl-tRNA synthetase family. As to quaternary structure, homodimer. The cofactor is Mg(2+).

It is found in the cytoplasm. The enzyme catalyses tRNA(Lys) + L-lysine + ATP = L-lysyl-tRNA(Lys) + AMP + diphosphate. In Edwardsiella ictaluri (strain 93-146), this protein is Lysine--tRNA ligase.